The primary structure comprises 245 residues: Probable phosphatase YcdX (245 aa).

The Zn(2+) site is built by His-7, His-9, His-15, His-40, Glu-73, His-101, His-131, Asp-192, and His-194.

Belongs to the PHP family. In terms of assembly, homotrimer. Zn(2+) is required as a cofactor.

The protein is Probable phosphatase YcdX of Salmonella arizonae (strain ATCC BAA-731 / CDC346-86 / RSK2980).